A 196-amino-acid polypeptide reads, in one-letter code: MLKIEGLVLASSSKYRLALLEQIGVVPGEVVSPNIDESLLKGELPRRYCMRMARTKADAEAALRSDKFVLGADTVAYCGKRVLSKTESEDCAVRYLEMLSGRRHRVCTSVCLRSPGGIVHERSVVSVVKFKSMSKGEIEYYISSGQWRGKAGGYGIQGFAGALISWIQGSYSSIAGLPLHETYCLLGGYFDLKHIP.

Catalysis depends on aspartate 73, which acts as the Proton acceptor.

This sequence belongs to the Maf family. The cofactor is a divalent metal cation.

It localises to the cytoplasm. It carries out the reaction a ribonucleoside 5'-triphosphate + H2O = a ribonucleoside 5'-phosphate + diphosphate + H(+). The enzyme catalyses a 2'-deoxyribonucleoside 5'-triphosphate + H2O = a 2'-deoxyribonucleoside 5'-phosphate + diphosphate + H(+). Functionally, nucleoside triphosphate pyrophosphatase. May have a dual role in cell division arrest and in preventing the incorporation of modified nucleotides into cellular nucleic acids. The chain is Nucleoside triphosphate pyrophosphatase from Anaplasma marginale (strain St. Maries).